The primary structure comprises 361 residues: Large ribosomal subunit protein uL3 (361 aa).

The interval 339–361 (RPPKKKPPVQRPQITYVSVESKQ) is disordered. The span at 350–361 (PQITYVSVESKQ) shows a compositional bias: polar residues.

The protein belongs to the universal ribosomal protein uL3 family. In terms of assembly, part of the 50S ribosomal subunit. Forms a cluster with proteins L14 and L24e.

Its function is as follows. One of the primary rRNA binding proteins, it binds directly near the 3'-end of the 23S rRNA, where it nucleates assembly of the 50S subunit. The sequence is that of Large ribosomal subunit protein uL3 from Pyrococcus abyssi (strain GE5 / Orsay).